We begin with the raw amino-acid sequence, 208 residues long: Uracil phosphoribosyltransferase (208 aa).

Residues R78, R103, and 130-138 contribute to the 5-phospho-alpha-D-ribose 1-diphosphate site; that span reads DPMLATGGS. Uracil-binding positions include I193 and 198 to 200; that span reads GDA. D199 contacts 5-phospho-alpha-D-ribose 1-diphosphate.

It belongs to the UPRTase family. The cofactor is Mg(2+).

The enzyme catalyses UMP + diphosphate = 5-phospho-alpha-D-ribose 1-diphosphate + uracil. It participates in pyrimidine metabolism; UMP biosynthesis via salvage pathway; UMP from uracil: step 1/1. With respect to regulation, allosterically activated by GTP. Catalyzes the conversion of uracil and 5-phospho-alpha-D-ribose 1-diphosphate (PRPP) to UMP and diphosphate. This is Uracil phosphoribosyltransferase from Yersinia enterocolitica serotype O:8 / biotype 1B (strain NCTC 13174 / 8081).